Consider the following 261-residue polypeptide: 5'-nucleotidase SurE (261 aa).

4 residues coordinate a divalent metal cation: D8, D9, S43, and N96.

Belongs to the SurE nucleotidase family. A divalent metal cation is required as a cofactor.

The protein resides in the cytoplasm. It catalyses the reaction a ribonucleoside 5'-phosphate + H2O = a ribonucleoside + phosphate. Nucleotidase that shows phosphatase activity on nucleoside 5'-monophosphates. The protein is 5'-nucleotidase SurE of Roseobacter denitrificans (strain ATCC 33942 / OCh 114) (Erythrobacter sp. (strain OCh 114)).